The chain runs to 148 residues: Large ribosomal subunit protein uL15 (148 aa).

A disordered region spans residues 1 to 51; sequence MNLSSLKPAEGAVKSRKRIGRGPGSGLGGTSTRGHKGAKSRSGYSKKIGFE. The span at 21 to 31 shows a compositional bias: gly residues; the sequence is RGPGSGLGGTS.

Belongs to the universal ribosomal protein uL15 family. Part of the 50S ribosomal subunit.

In terms of biological role, binds to the 23S rRNA. The chain is Large ribosomal subunit protein uL15 from Porphyromonas gingivalis (strain ATCC 33277 / DSM 20709 / CIP 103683 / JCM 12257 / NCTC 11834 / 2561).